The sequence spans 438 residues: Protein kinase PINOID (438 aa).

The disordered stretch occupies residues 1–24 (MLRESDGEMSLGTTNSPISSGTES). Polar residues predominate over residues 11-24 (LGTTNSPISSGTES). In terms of domain architecture, Protein kinase spans 75 to 394 (FRLMRRIGAG…AAEVKVHPFF (320 aa)). Residues 81–89 (IGAGDIGTV) and Lys109 each bind ATP. Residue Asp205 is the Proton acceptor of the active site. Residues 395–438 (KGLNFALIRTLTPPEIPSSVVKKPMKSATFSGRSSNKPAAFDYF) enclose the AGC-kinase C-terminal domain.

It belongs to the protein kinase superfamily. Ser/Thr protein kinase family. Interacts with PDK1, CML12 and PBP1. Component of a complex made of PINs (e.g. PIN1 and PIN2), MAB4/MELs (e.g. NPY1/MAB4 and NPY5/MEL1) and AGC kinases (e.g. D6PK and PID) at the plasma membrane. Binds directly to PIN2, NPY1/MAB4 and NPY5/MEL1. In terms of processing, autophosphorylated. Phosphorylated by PDK1. As to expression, expressed in root hair cells, shoot xylem parenchyma cells and endodermis around the vasculature. Expressed in anther primordia, vasculature of the growing flower stalk, young pedicels and bracts and developing sepals, but not in petals. In pistils, transiently expressed in the vasculature of the style and the septum, and in the integuments and funiculus of the developing ovule.

It localises to the cytoplasm. The protein resides in the cytosol. Its subcellular location is the cell membrane. The enzyme catalyses L-seryl-[protein] + ATP = O-phospho-L-seryl-[protein] + ADP + H(+). The catalysed reaction is L-threonyl-[protein] + ATP = O-phospho-L-threonyl-[protein] + ADP + H(+). Activated by magnesium and PDK1. Inhibited by staurosporine. Repressed by calcium. Serine/threonine-protein kinase involved in the regulation of auxin signaling. Acts as a positive regulator of cellular auxin efflux and regulates organ development by enhancing polar auxin transport. Phosphorylates conserved serine residues in the PIN auxin efflux carriers. Phosphorylation of PIN proteins is required and sufficient for apical-basal PIN polarity that enables directional intercellular auxin fluxes, which mediate differential growth, tissue patterning and organogenesis. Phosphorylates PIN proteins (e.g. PIN1 and PIN2), especially when NPY proteins (e.g. NPY1/MAB4 and NPY5/MEL1) are recruited at the plasma membrane; this enhances the polarized localizations (apical or basal) of PINs in the cell by limiting their lateral diffusion-based escape. Acts in association with PIN1 to control the establishment of bilateral symmetry and promotion of cotyledon outgrowth. Regulates root gravitropism through modulation of PIN2-dependent basipetal auxin transport. Required for polarization of PIN3-dependent auxin transport for hypocotyl gravitropic response. The protein kinase activity of PID is essential for its auxin efflux regulatory function. PID kinase and PP2A phosphatase activities antagonistically regulate phosphorylation of PIN proteins, affecting PIN sorting. The sequence is that of Protein kinase PINOID from Arabidopsis thaliana (Mouse-ear cress).